Here is an 84-residue protein sequence, read N- to C-terminus: PAMP-induced secreted peptide 2 (84 aa).

Positions 1-24 are cleaved as a signal peptide; sequence MMMNKNVLSSILFFMLIGSVLVES. Residues 50–84 are disordered; the sequence is KDSGPSPGEGHKVVDRKDTFRFVKHSGPSPSGPGH. The span at 58-70 shows a compositional bias: basic and acidic residues; sequence EGHKVVDRKDTFR. 4-hydroxyproline occurs at positions 77 and 79.

Contains 4-hydroxyproline; hydroxylated on Pro-77 and Pro-79.

Its subcellular location is the secreted. The protein localises to the extracellular space. The protein resides in the apoplast. In terms of biological role, endogenous secreted peptide that acts as elicitor of immune response and positive regulator of defense response. Amplifies the immune response triggered by flg22, the active epitope of bacterial flagellin. Acts as a negative regulator of root growth. This is PAMP-induced secreted peptide 2 from Arabidopsis thaliana (Mouse-ear cress).